The chain runs to 202 residues: 3-isopropylmalate dehydratase small subunit (202 aa).

Belongs to the LeuD family. LeuD type 1 subfamily. Heterodimer of LeuC and LeuD.

It carries out the reaction (2R,3S)-3-isopropylmalate = (2S)-2-isopropylmalate. Its pathway is amino-acid biosynthesis; L-leucine biosynthesis; L-leucine from 3-methyl-2-oxobutanoate: step 2/4. Its function is as follows. Catalyzes the isomerization between 2-isopropylmalate and 3-isopropylmalate, via the formation of 2-isopropylmaleate. This Novosphingobium aromaticivorans (strain ATCC 700278 / DSM 12444 / CCUG 56034 / CIP 105152 / NBRC 16084 / F199) protein is 3-isopropylmalate dehydratase small subunit.